A 375-amino-acid chain; its full sequence is Carbamoyl phosphate synthase small chain (375 aa).

The interval 1–186 (MRALLALEDG…LEPGGCAWVG (186 aa)) is CPSase. L-glutamine contacts are provided by Ser-45, Gly-238, and Gly-240. One can recognise a Glutamine amidotransferase type-1 domain in the interval 190 to 375 (RLVVYDFGIK…RNMVREAAGC (186 aa)). Cys-265 acts as the Nucleophile in catalysis. Leu-266, Gln-269, Asn-307, Gly-309, and Phe-310 together coordinate L-glutamine. Active-site residues include His-348 and Glu-350.

It belongs to the CarA family. Composed of two chains; the small (or glutamine) chain promotes the hydrolysis of glutamine to ammonia, which is used by the large (or ammonia) chain to synthesize carbamoyl phosphate. Tetramer of heterodimers (alpha,beta)4.

It catalyses the reaction hydrogencarbonate + L-glutamine + 2 ATP + H2O = carbamoyl phosphate + L-glutamate + 2 ADP + phosphate + 2 H(+). The catalysed reaction is L-glutamine + H2O = L-glutamate + NH4(+). It functions in the pathway amino-acid biosynthesis; L-arginine biosynthesis; carbamoyl phosphate from bicarbonate: step 1/1. It participates in pyrimidine metabolism; UMP biosynthesis via de novo pathway; (S)-dihydroorotate from bicarbonate: step 1/3. Functionally, small subunit of the glutamine-dependent carbamoyl phosphate synthetase (CPSase). CPSase catalyzes the formation of carbamoyl phosphate from the ammonia moiety of glutamine, carbonate, and phosphate donated by ATP, constituting the first step of 2 biosynthetic pathways, one leading to arginine and/or urea and the other to pyrimidine nucleotides. The small subunit (glutamine amidotransferase) binds and cleaves glutamine to supply the large subunit with the substrate ammonia. In Nitratidesulfovibrio vulgaris (strain ATCC 29579 / DSM 644 / CCUG 34227 / NCIMB 8303 / VKM B-1760 / Hildenborough) (Desulfovibrio vulgaris), this protein is Carbamoyl phosphate synthase small chain.